We begin with the raw amino-acid sequence, 498 residues long: U4/U6 small nuclear ribonucleoprotein Prp31 (498 aa).

Coiled coils occupy residues 84-119 (EAAP…KYSK) and 180-214 (DEEL…MSFI). The 119-residue stretch at 214-332 (IAPNLSIIVG…IERKFDKWQE (119 aa)) folds into the Nop domain. The disordered stretch occupies residues 333–356 (PPPVKQVKPLPAPLDGQRKKRGGR). The short motif at 350-363 (RKKRGGRRYRKMKE) is the Nuclear localization signal (NLS) element.

Belongs to the PRP31 family. As to quaternary structure, identified in the spliceosome B complex. Component of the U4/U6-U5 tri-snRNP complex. Component of some MLL1/MLL complex.

It is found in the nucleus. The protein localises to the nucleus speckle. It localises to the cajal body. In terms of biological role, involved in pre-mRNA splicing as component of the spliceosome. Required for the assembly of the U4/U5/U6 tri-snRNP complex, one of the building blocks of the spliceosome. This Xenopus tropicalis (Western clawed frog) protein is U4/U6 small nuclear ribonucleoprotein Prp31 (prpf31).